The chain runs to 207 residues: Large ribosomal subunit protein uL4 (207 aa).

The interval 49-78 is disordered; sequence HAVKNRSAVRGGGRKPWRQKGTGRARQGSI. Positions 60-71 are enriched in basic residues; sequence GGRKPWRQKGTG.

This sequence belongs to the universal ribosomal protein uL4 family. As to quaternary structure, part of the 50S ribosomal subunit.

In terms of biological role, one of the primary rRNA binding proteins, this protein initially binds near the 5'-end of the 23S rRNA. It is important during the early stages of 50S assembly. It makes multiple contacts with different domains of the 23S rRNA in the assembled 50S subunit and ribosome. Forms part of the polypeptide exit tunnel. This is Large ribosomal subunit protein uL4 from Enterococcus faecalis (strain ATCC 700802 / V583).